The chain runs to 395 residues: Dihydroorotate dehydrogenase (quinone), mitochondrial (395 aa).

Residues 1–10 (MAWRHLKKRA) constitute a mitochondrion; not cleaved transit peptide. At 1–10 (MAWRHLKKRA) the chain is on the mitochondrial matrix side. The chain crosses the membrane as a helical span at residues 11 to 30 (QDAVIILGGGGLLFASYLMA). Residues 31 to 395 (TGDERFYAEH…TDAIGADHRR (365 aa)) lie on the Mitochondrial intermembrane side of the membrane. Residues 95-99 (AGFDK) and Ser-119 each bind FMN. Lys-99 lines the substrate pocket. 144 to 148 (NRYGF) contacts substrate. Residues Asn-180 and Asn-211 each contribute to the FMN site. 211–216 (NVSSPN) lines the substrate pocket. Ser-214 functions as the Nucleophile in the catalytic mechanism. 2 residues coordinate FMN: Lys-254 and Thr-282. 283–284 (NT) serves as a coordination point for substrate. Residues Gly-305, Gly-334, and 355–356 (YT) contribute to the FMN site.

The protein belongs to the dihydroorotate dehydrogenase family. Type 2 subfamily. Monomer. FMN serves as cofactor. Post-translationally, the uncleaved transit peptide is required for mitochondrial targeting and proper membrane integration.

It localises to the mitochondrion inner membrane. The enzyme catalyses (S)-dihydroorotate + a quinone = orotate + a quinol. Its pathway is pyrimidine metabolism; UMP biosynthesis via de novo pathway; orotate from (S)-dihydroorotate (quinone route): step 1/1. Functionally, catalyzes the conversion of dihydroorotate to orotate with quinone as electron acceptor. Required for UMP biosynthesis via de novo pathway. The protein is Dihydroorotate dehydrogenase (quinone), mitochondrial (DHODH) of Homo sapiens (Human).